The primary structure comprises 210 residues: Glutathione S-transferase P (210 aa).

Residues 2-81 (PPYTVVYFPV…HLGRTLGLYG (80 aa)) enclose the GST N-terminal domain. The residue at position 4 (Tyr-4) is a Phosphotyrosine; by EGFR. Glutathione-binding positions include Tyr-8, Arg-14, Trp-39, Lys-45, and 52–53 (QL). Thr-62 carries the phosphothreonine modification. 65–66 (QS) contacts glutathione. The 122-residue stretch at 83-204 (DQQEAALVDM…ASPEYVNLPI (122 aa)) folds into the GST C-terminal domain. N6-succinyllysine occurs at positions 103 and 116. Lys-128 is modified (N6-acetyllysine). The residue at position 199 (Tyr-199) is a Phosphotyrosine; by EGFR.

It belongs to the GST superfamily. Pi family. As to quaternary structure, homodimer. Interacts with CDK5.

It localises to the cytoplasm. The protein resides in the mitochondrion. The protein localises to the nucleus. It carries out the reaction RX + glutathione = an S-substituted glutathione + a halide anion + H(+). The catalysed reaction is prostaglandin J2 + glutathione = prostaglandin J2-S-(R)-glutathione. The enzyme catalyses prostaglandin J2 + glutathione = prostaglandin J2-S-(S)-glutathione. It catalyses the reaction prostaglandin A2 + glutathione = prostaglandin A2-S-(S)-glutathione. It carries out the reaction 11(S)-hydroxy-14(S),15(S)-epoxy-(5Z,8Z,12E)-eicosatrienoate + glutathione = (11S,15S)-dihydroxy-14(R)-S-glutathionyl-(5Z,8Z,12E)-eicosatrienoate. Conjugation of reduced glutathione to a wide number of exogenous and endogenous hydrophobic electrophiles. Involved in the formation of glutathione conjugates of both prostaglandin A2 (PGA2) and prostaglandin J2 (PGJ2). Participates in the formation of novel hepoxilin regioisomers. Negatively regulates CDK5 activity via p25/p35 translocation to prevent neurodegeneration. In Homo sapiens (Human), this protein is Glutathione S-transferase P.